Reading from the N-terminus, the 428-residue chain is Gamma-glutamyl phosphate reductase (428 aa).

This sequence belongs to the gamma-glutamyl phosphate reductase family.

It localises to the cytoplasm. It carries out the reaction L-glutamate 5-semialdehyde + phosphate + NADP(+) = L-glutamyl 5-phosphate + NADPH + H(+). Its pathway is amino-acid biosynthesis; L-proline biosynthesis; L-glutamate 5-semialdehyde from L-glutamate: step 2/2. Its function is as follows. Catalyzes the NADPH-dependent reduction of L-glutamate 5-phosphate into L-glutamate 5-semialdehyde and phosphate. The product spontaneously undergoes cyclization to form 1-pyrroline-5-carboxylate. In Anaeromyxobacter sp. (strain Fw109-5), this protein is Gamma-glutamyl phosphate reductase.